A 24-amino-acid chain; its full sequence is Brevinin-1SY (24 aa).

An intrachain disulfide couples Cys18 to Cys24.

Expressed by the skin glands.

It localises to the secreted. Its function is as follows. Antibacterial activity against Gram-positive bacterium S.aureus and Gram-negative bacterium E.coli. The sequence is that of Brevinin-1SY from Lithobates sylvaticus (Wood frog).